Consider the following 548-residue polypeptide: Glutamate--tRNA ligase (548 aa).

A 'HIGH' region motif is present at residues 102–112; the sequence is PSPSGPLHIGH.

The protein belongs to the class-I aminoacyl-tRNA synthetase family. Glutamate--tRNA ligase type 2 subfamily.

It is found in the cytoplasm. It carries out the reaction tRNA(Glu) + L-glutamate + ATP = L-glutamyl-tRNA(Glu) + AMP + diphosphate. Catalyzes the attachment of glutamate to tRNA(Glu) in a two-step reaction: glutamate is first activated by ATP to form Glu-AMP and then transferred to the acceptor end of tRNA(Glu). This is Glutamate--tRNA ligase from Thermoplasma volcanium (strain ATCC 51530 / DSM 4299 / JCM 9571 / NBRC 15438 / GSS1).